We begin with the raw amino-acid sequence, 325 residues long: All-trans-nonaprenyl-diphosphate synthase (geranyl-diphosphate specific) (325 aa).

Residues Lys-48, Arg-51, and His-81 each contribute to the isopentenyl diphosphate site. Positions 88 and 92 each coordinate Mg(2+). Arg-97 serves as a coordination point for an all-trans-polyprenyl diphosphate. Isopentenyl diphosphate is bound at residue Arg-98. An all-trans-polyprenyl diphosphate contacts are provided by Lys-174, Thr-175, Gln-211, and Lys-228.

This sequence belongs to the FPP/GGPP synthase family. Homodimer. Requires Mg(2+) as cofactor.

The catalysed reaction is 7 isopentenyl diphosphate + (2E)-geranyl diphosphate = all-trans-nonaprenyl diphosphate + 7 diphosphate. In terms of biological role, catalyzes the sequential condensation of isopentenyl diphosphate (IPP) with the allylic substrate to give solanesyl diphosphate. Could be important to determine the side chain length of ubiquinone. The chain is All-trans-nonaprenyl-diphosphate synthase (geranyl-diphosphate specific) (sdsA) from Rhodobacter capsulatus (Rhodopseudomonas capsulata).